Here is a 167-residue protein sequence, read N- to C-terminus: Large ribosomal subunit protein uL10 (167 aa).

It belongs to the universal ribosomal protein uL10 family. As to quaternary structure, part of the ribosomal stalk of the 50S ribosomal subunit. The N-terminus interacts with L11 and the large rRNA to form the base of the stalk. The C-terminus forms an elongated spine to which L12 dimers bind in a sequential fashion forming a multimeric L10(L12)X complex.

Forms part of the ribosomal stalk, playing a central role in the interaction of the ribosome with GTP-bound translation factors. In Yersinia enterocolitica serotype O:8 / biotype 1B (strain NCTC 13174 / 8081), this protein is Large ribosomal subunit protein uL10.